Consider the following 1347-residue polypeptide: Protocadherin-11 X-linked (1347 aa).

An N-terminal signal peptide occupies residues 1–23 (MDLLSGTYIFAVLLACVVFHSGA). Residues 24–812 (QEKNYTIREE…VSSPTSDYVK (789 aa)) lie on the Extracellular side of the membrane. Cadherin domains follow at residues 26 to 139 (KNYT…APLF), 140 to 249 (PATV…HPVF), 250 to 355 (KETE…VPSI), 362 to 466 (NPVN…APVF), 467 to 570 (TQSF…SPVF), 571 to 673 (THNE…KPVF), and 677 to 795 (PSNY…APVT). 3 N-linked (GlcNAc...) asparagine glycosylation sites follow: Asn27, Asn48, and Asn54. A glycan (N-linked (GlcNAc...) asparagine) is linked at Asn344. Residue Asn553 is glycosylated (N-linked (GlcNAc...) asparagine). Asn773 carries an N-linked (GlcNAc...) asparagine glycan. Residues 813 to 833 (ILVAAVAGTITVVVVIFITAV) form a helical membrane-spanning segment. The Cytoplasmic portion of the chain corresponds to 834 to 1347 (VRCRQAPHLK…DSPVMEEHPL (514 aa)). Disordered stretches follow at residues 1057-1091 (LPEGSQESSSDGGLGDHDAGSLTSTSHGLPLGYPQ), 1097-1116 (RATPSNRTEGDGNSDPESTF), and 1325-1347 (TFTPRQQARPSRGDSPVMEEHPL).

The protein localises to the cell membrane. In terms of biological role, potential calcium-dependent cell-adhesion protein. The sequence is that of Protocadherin-11 X-linked (PCDH11X) from Pan paniscus (Pygmy chimpanzee).